The chain runs to 149 residues: Urease accessory protein UreE (149 aa).

The protein belongs to the UreE family.

It is found in the cytoplasm. Functionally, involved in urease metallocenter assembly. Binds nickel. Probably functions as a nickel donor during metallocenter assembly. This chain is Urease accessory protein UreE, found in Ruegeria pomeroyi (strain ATCC 700808 / DSM 15171 / DSS-3) (Silicibacter pomeroyi).